A 220-amino-acid chain; its full sequence is Protein-methionine-sulfoxide reductase heme-binding subunit MsrQ (220 aa).

A run of 5 helical transmembrane segments spans residues 20 to 40, 52 to 72, 86 to 106, 122 to 142, and 159 to 179; these read IWLL…LGAS, EHTL…VTPI, ALGL…MVLD, PFIT…LTSN, and LVYV…KSWP.

The protein belongs to the MsrQ family. In terms of assembly, heterodimer of a catalytic subunit (MsrP) and a heme-binding subunit (MsrQ). FMN serves as cofactor. Heme b is required as a cofactor.

It is found in the cell inner membrane. Its function is as follows. Part of the MsrPQ system that repairs oxidized periplasmic proteins containing methionine sulfoxide residues (Met-O), using respiratory chain electrons. Thus protects these proteins from oxidative-stress damage caused by reactive species of oxygen and chlorine generated by the host defense mechanisms. MsrPQ is essential for the maintenance of envelope integrity under bleach stress, rescuing a wide series of structurally unrelated periplasmic proteins from methionine oxidation. MsrQ provides electrons for reduction to the reductase catalytic subunit MsrP, using the quinone pool of the respiratory chain. This Brucella anthropi (strain ATCC 49188 / DSM 6882 / CCUG 24695 / JCM 21032 / LMG 3331 / NBRC 15819 / NCTC 12168 / Alc 37) (Ochrobactrum anthropi) protein is Protein-methionine-sulfoxide reductase heme-binding subunit MsrQ.